A 306-amino-acid chain; its full sequence is Glutaminase (306 aa).

Substrate-binding residues include serine 64, asparagine 115, glutamate 159, asparagine 166, tyrosine 190, tyrosine 242, and valine 260.

The protein belongs to the glutaminase family. Homotetramer.

The enzyme catalyses L-glutamine + H2O = L-glutamate + NH4(+). This chain is Glutaminase, found in Vibrio cholerae serotype O1 (strain ATCC 39315 / El Tor Inaba N16961).